The sequence spans 161 residues: Peptidyl-prolyl cis-trans isomerase-like 3 (161 aa).

The PPIase cyclophilin-type domain occupies 1–154; the sequence is MAVTLHTDVG…NDVHIKDITI (154 aa).

The protein belongs to the cyclophilin-type PPIase family. PPIL3 subfamily.

The enzyme catalyses [protein]-peptidylproline (omega=180) = [protein]-peptidylproline (omega=0). PPIases accelerate the folding of proteins. It catalyzes the cis-trans isomerization of proline imidic peptide bonds in oligopeptides. This Gallus gallus (Chicken) protein is Peptidyl-prolyl cis-trans isomerase-like 3 (PPIL3).